The following is a 618-amino-acid chain: Serine/threonine-protein kinase TNNI3K (618 aa).

Residue Gly-2 is the site of N-myristoyl glycine attachment. Residues 21–51 adopt a coiled-coil conformation; the sequence is SESYVITIERLEDDLKIKEKELTELRNIFGS. 10 ANK repeats span residues 66-96, 100-129, 133-162, 166-195, 199-228, 234-263, 269-298, 304-335, 339-368, and 381-410; these read NGLS…RPSR, NGFT…DIQQ, GGLT…NVNI, VFFT…DVNV, VGDR…KADV, EDHV…EVQP, YGDT…TESL, FSET…NINH, DGHT…DMNL, and DEQT…PQDE. The 156-residue stretch at 463-618 folds into the Protein kinase domain; sequence IEFHEIIGSG…TAHTIYLLAP (156 aa). Residues 469–477 and Lys-490 contribute to the ATP site; that span reads IGSGSFGKV. The active-site Proton acceptor is the Asp-588.

Belongs to the protein kinase superfamily. TKL Ser/Thr protein kinase family. MAP kinase kinase kinase subfamily. In terms of assembly, interacts with TNNI3, ACTC, ACTA1, MYBPC3, AIP, FABP3 and HADHB. Requires Mg(2+) as cofactor. In terms of processing, autophosphorylated.

The protein resides in the nucleus. Its subcellular location is the cytoplasm. The enzyme catalyses L-seryl-[protein] + ATP = O-phospho-L-seryl-[protein] + ADP + H(+). It carries out the reaction L-threonyl-[protein] + ATP = O-phospho-L-threonyl-[protein] + ADP + H(+). May play a role in cardiac physiology. This chain is Serine/threonine-protein kinase TNNI3K, found in Pongo abelii (Sumatran orangutan).